The primary structure comprises 21 residues: S-layer protein 2 (21 aa).

It localises to the secreted. Its subcellular location is the cell wall. The protein resides in the S-layer. In terms of biological role, the S-layer is a paracrystalline mono-layered assembly of proteins which coat the surface of bacteria. In Bacillus thuringiensis subsp. konkukian, this protein is S-layer protein 2.